The sequence spans 337 residues: Ketol-acid reductoisomerase (NADP(+)) (337 aa).

One can recognise a KARI N-terminal Rossmann domain in the interval 3–183 (VEMFYDADAD…GGARAGVIKT (181 aa)). NADP(+)-binding positions include 26–29 (YGSQ), Lys-49, Ser-52, Ser-54, and 84–87 (DTAQ). The active site involves His-109. Gly-135 serves as a coordination point for NADP(+). One can recognise a KARI C-terminal knotted domain in the interval 184–329 (TFKDETETDL…KKLRDLMSWV (146 aa)). The Mg(2+) site is built by Asp-192, Glu-196, Glu-228, and Glu-232. Residue Ser-253 coordinates substrate.

The protein belongs to the ketol-acid reductoisomerase family. Mg(2+) serves as cofactor.

It catalyses the reaction (2R)-2,3-dihydroxy-3-methylbutanoate + NADP(+) = (2S)-2-acetolactate + NADPH + H(+). The enzyme catalyses (2R,3R)-2,3-dihydroxy-3-methylpentanoate + NADP(+) = (S)-2-ethyl-2-hydroxy-3-oxobutanoate + NADPH + H(+). The protein operates within amino-acid biosynthesis; L-isoleucine biosynthesis; L-isoleucine from 2-oxobutanoate: step 2/4. It functions in the pathway amino-acid biosynthesis; L-valine biosynthesis; L-valine from pyruvate: step 2/4. In terms of biological role, involved in the biosynthesis of branched-chain amino acids (BCAA). Catalyzes an alkyl-migration followed by a ketol-acid reduction of (S)-2-acetolactate (S2AL) to yield (R)-2,3-dihydroxy-isovalerate. In the isomerase reaction, S2AL is rearranged via a Mg-dependent methyl migration to produce 3-hydroxy-3-methyl-2-ketobutyrate (HMKB). In the reductase reaction, this 2-ketoacid undergoes a metal-dependent reduction by NADPH to yield (R)-2,3-dihydroxy-isovalerate. The sequence is that of Ketol-acid reductoisomerase (NADP(+)) from Mycolicibacterium gilvum (strain PYR-GCK) (Mycobacterium gilvum (strain PYR-GCK)).